The chain runs to 297 residues: Phosphoribosylaminoimidazole-succinocarboxamide synthase (297 aa).

The protein belongs to the SAICAR synthetase family.

It catalyses the reaction 5-amino-1-(5-phospho-D-ribosyl)imidazole-4-carboxylate + L-aspartate + ATP = (2S)-2-[5-amino-1-(5-phospho-beta-D-ribosyl)imidazole-4-carboxamido]succinate + ADP + phosphate + 2 H(+). Its pathway is purine metabolism; IMP biosynthesis via de novo pathway; 5-amino-1-(5-phospho-D-ribosyl)imidazole-4-carboxamide from 5-amino-1-(5-phospho-D-ribosyl)imidazole-4-carboxylate: step 1/2. This Mycobacterium leprae (strain TN) protein is Phosphoribosylaminoimidazole-succinocarboxamide synthase (purC).